We begin with the raw amino-acid sequence, 494 residues long: NADPH:adrenodoxin oxidoreductase, mitochondrial (494 aa).

The transit peptide at 1–34 (MAPRCWHWWRWSAWSGLRPSPSRSTPTPGFCQKF) directs the protein to the mitochondrion. FAD-binding residues include alanine 51, glutamate 72, leucine 80, and valine 116. Residues 187–190 (QGNV), 231–232 (RR), and glutamate 243 each bind NADP(+). The residue at position 313 (serine 313) is a Phosphoserine. Residues tryptophan 401 and 408-410 (GVI) each bind FAD. Glycine 408 provides a ligand contact to NADP(+).

The protein belongs to the ferredoxin--NADP reductase type 1 family. In terms of assembly, monomer. Interacts directly with FDX1. The cofactor is FAD. Expressed in the adrenal, testis and ovary and to a lesser extent in the liver and kidney.

It localises to the mitochondrion inner membrane. It carries out the reaction 2 reduced [adrenodoxin] + NADP(+) + H(+) = 2 oxidized [adrenodoxin] + NADPH. It catalyses the reaction 2 reduced [2Fe-2S]-[ferredoxin] + NADP(+) + H(+) = 2 oxidized [2Fe-2S]-[ferredoxin] + NADPH. It participates in steroid metabolism; cholesterol metabolism. Its function is as follows. Serves as the first electron transfer protein in all the mitochondrial P450 systems including cholesterol side chain cleavage in all steroidogenic tissues, steroid 11-beta hydroxylation in the adrenal cortex, 25-OH-vitamin D3-24 hydroxylation in the kidney, and sterol C-27 hydroxylation in the liver. Also acts as a ferredoxin--NADP(+) reductase essential for coenzyme Q biosynthesis: together with FDX2, transfers the electrons required for the hydroxylation reaction performed by COQ6. This Mus musculus (Mouse) protein is NADPH:adrenodoxin oxidoreductase, mitochondrial (Fdxr).